The sequence spans 245 residues: Ribosome maturation factor RimP (245 aa).

It belongs to the RimP family.

Its subcellular location is the cytoplasm. Required for maturation of 30S ribosomal subunits. This Verminephrobacter eiseniae (strain EF01-2) protein is Ribosome maturation factor RimP.